The chain runs to 120 residues: MSDNITSARATARFVRVSPMKARRVIDLVRGKTVVEALSILKYAPQAASEPVAKVVASAAANAENNFGLDPRTLVISEAYADEGPTMRRFQPRAQGRAFQIRKRSSHITVVVESQKEGAN.

It belongs to the universal ribosomal protein uL22 family. As to quaternary structure, part of the 50S ribosomal subunit.

Functionally, this protein binds specifically to 23S rRNA; its binding is stimulated by other ribosomal proteins, e.g. L4, L17, and L20. It is important during the early stages of 50S assembly. It makes multiple contacts with different domains of the 23S rRNA in the assembled 50S subunit and ribosome. The globular domain of the protein is located near the polypeptide exit tunnel on the outside of the subunit, while an extended beta-hairpin is found that lines the wall of the exit tunnel in the center of the 70S ribosome. This Corynebacterium efficiens (strain DSM 44549 / YS-314 / AJ 12310 / JCM 11189 / NBRC 100395) protein is Large ribosomal subunit protein uL22.